A 688-amino-acid polypeptide reads, in one-letter code: MTARKIFVTTALPYANGNFHIGHIMEYIQADTWVRAQRMQGNAVNFVGADDAHGAPIMIAAEKAGKTPQQFVADIAAGRKQYLDGFHIAFDNWSNTDSPENHELSQQIYLDLKAAGFIETRTIEQFFDPEKNMFLPDRFIKGECPRCHAKDQYGDNCEVCSSVYAPTDLINPYSALSGAKPVLKTSEHFFFKLSDPRAVEFLTEWTQNGQHVQPEVAAKIKEWFGTRTNPDGTTSEGLDDWDISRDAPYFGIEIPDAPGKYFYVWLDAPVGYLASLKNLLNKRGEDYDAYMADPQLEQYHFIGKDIITFHTLFWPAMLKFSGRKTPTKICVHGFMTVNNGEKMSKSRGTGLDPLKYLALGMNPEWLRYYLGAKLNGKNEDIDFNPEDFMARVNSDLIGKYVNIASRAAGFIFKRFGGKLGEVSADGQALLAQLREQAGPIVAAYEARDTARAVRETMLLCDRVNSYVDANKPWELAKQEGMEARLQDVCTTCIEAFRILTIYLKPILPQVAAEVARFLIVPPEQFAEVAQPLGAGHQIGQYQHLMQRVTQEQLDALFEPPAPAVEKVIPGGEEIAPTITIDDFAKVDLRIAKIVKCEAVEGSTKLLRLTLDVGEGQTRNVFSGIASMYKPKDLQGKLTVMVANLAPRKMKFGLSEGMVLAASHADEKAHPGIFVLEPFPGAQPGMRIH.

A 'HIGH' region motif is present at residues Pro-13 to His-23. Positions 144, 147, 157, and 160 each coordinate Zn(2+). A 'KMSKS' region motif is present at residues Lys-342–Ser-346. Position 345 (Lys-345) interacts with ATP. Residues Asp-582 to His-688 form the tRNA-binding domain.

The protein belongs to the class-I aminoacyl-tRNA synthetase family. MetG type 1 subfamily. Homodimer. It depends on Zn(2+) as a cofactor.

It is found in the cytoplasm. The catalysed reaction is tRNA(Met) + L-methionine + ATP = L-methionyl-tRNA(Met) + AMP + diphosphate. Its function is as follows. Is required not only for elongation of protein synthesis but also for the initiation of all mRNA translation through initiator tRNA(fMet) aminoacylation. The protein is Methionine--tRNA ligase of Acidovorax sp. (strain JS42).